Here is a 163-residue protein sequence, read N- to C-terminus: Putative pre-16S rRNA nuclease (163 aa).

It belongs to the YqgF nuclease family.

It localises to the cytoplasm. Functionally, could be a nuclease involved in processing of the 5'-end of pre-16S rRNA. The polypeptide is Putative pre-16S rRNA nuclease (Rhodopseudomonas palustris (strain BisB18)).